The sequence spans 145 residues: Ribonuclease VapC48 (145 aa).

The Mg(2+) site is built by D6 and D109. The PINc domain occupies 15-141 (HRASPFHDKA…RKFEGIRIRD (127 aa)).

It belongs to the PINc/VapC protein family. Mg(2+) serves as cofactor.

Toxic component of a type II toxin-antitoxin (TA) system. An RNase. Its cognate antitoxin is VapB48. The sequence is that of Ribonuclease VapC48 from Mycobacterium tuberculosis (strain CDC 1551 / Oshkosh).